The sequence spans 36 residues: ECRWFWGGCNNDADCCKHLECKRKWPHICLWDGTFT.

Intrachain disulfides connect C2–C16, C9–C21, and C15–C29.

Belongs to the neurotoxin 10 (Hwtx-1) family. Expressed by the venom gland.

It localises to the secreted. In terms of biological role, gating-modifier toxin that targets both voltage-gated sodium and calcium channels, with described activities on human Nav1.7/SCN9A (IC(50)=5.5-7 nM), hNav1.6/SCN10A (IC(50)=9.9 nM), hNav1.4/SCN4A (IC(50)=62.9 nM), hCav3.2/CACNA1H (IC(50)=955.4 nM or 63.5% inhibition at 10 uM), hCav3.1/CACNA1G (95.1% inhibition at 10 uM), hCav3.3/CACNA1I (90.8% inhibition at 10 uM). Acts on Cav3 currents mainly by inducing a strong depolarizing shift in the current-voltage curve. The protein is Mu/omega-theraphotoxin-Pmu1a of Pterinochilus murinus (Mombasa golden starburst baboon spider).